A 1378-amino-acid polypeptide reads, in one-letter code: Roundabout homolog 2 (1378 aa).

The first 21 residues, 1–21 (MSLLMFTQLLLCGFLYVRVDG), serve as a signal peptide directing secretion. Over 22-859 (SRLRQEDFPP…EQITDVVKQP (838 aa)) the chain is Extracellular. 5 consecutive Ig-like C2-type domains span residues 31–127 (PRIV…ASLE), 133–220 (DDFR…AELT), 225–309 (PTFL…ATLT), 314–409 (PQFV…LEVT), and 418–504 (PIIL…AVLD). Cys-52 and Cys-110 are disulfide-bonded. A glycan (N-linked (GlcNAc...) asparagine) is linked at Asn-123. 3 disulfide bridges follow: Cys-154/Cys-203, Cys-246/Cys-293, and Cys-335/Cys-391. The N-linked (GlcNAc...) asparagine glycan is linked to Asn-426. Cys-439 and Cys-488 are oxidised to a cystine. Fibronectin type-III domains are found at residues 524–618 (PPSK…TQDI), 637–735 (VLVR…TEEA), and 739–836 (PPQS…IGRR). The interval 603-625 (LSDPSPMSDPVRTQDISPPAQGV) is disordered. 4 N-linked (GlcNAc...) asparagine glycosylation sites follow: Asn-752, Asn-782, Asn-789, and Asn-845. A helical membrane pass occupies residues 860–880 (AFIAGIGGACWVILMGFSIWL). At 881-1378 (YWRRKKRKGL…NSQGQFTGEL (498 aa)) the chain is on the cytoplasmic side. 3 disordered regions span residues 1032 to 1084 (GFGY…PLPG), 1124 to 1156 (EDDDRVPTPPVRGVASSPAISFGQQSTATLTPS), and 1215 to 1348 (DVAD…KTEV). Positions 1058 to 1067 (SSKPQKNNGS) are enriched in low complexity. The span at 1141–1155 (PAISFGQQSTATLTP) shows a compositional bias: polar residues. Thr-1154 is subject to Phosphothreonine. The residue at position 1156 (Ser-1156) is a Phosphoserine. The span at 1215 to 1228 (DVADDDADDEEEAL) shows a compositional bias: acidic residues. Residues 1240 to 1285 (TPGSSMDNLDSSVTGKAFTSSQRPRPTSPFSTDSNTSAALSQSQRP) show a composition bias toward polar residues. Residues 1319 to 1343 (SKPSFPSPGGHSSSGTASSKGSTGP) show a composition bias toward low complexity.

It belongs to the immunoglobulin superfamily. ROBO family. As to quaternary structure, interacts with SLIT2.

The protein localises to the membrane. Receptor for SLIT2, and probably SLIT1, which are thought to act as molecular guidance cue in cellular migration, including axonal navigation at the ventral midline of the neural tube and projection of axons to different regions during neuronal development. This chain is Roundabout homolog 2 (ROBO2), found in Homo sapiens (Human).